The primary structure comprises 150 residues: Large ribosomal subunit protein bL9 (150 aa).

The protein belongs to the bacterial ribosomal protein bL9 family.

Its function is as follows. Binds to the 23S rRNA. This Shewanella sp. (strain MR-4) protein is Large ribosomal subunit protein bL9.